The primary structure comprises 369 residues: Histidinol-phosphate aminotransferase 3 (369 aa).

K220 carries the N6-(pyridoxal phosphate)lysine modification.

The protein belongs to the class-II pyridoxal-phosphate-dependent aminotransferase family. Histidinol-phosphate aminotransferase subfamily. In terms of assembly, homodimer. The cofactor is pyridoxal 5'-phosphate.

It carries out the reaction L-histidinol phosphate + 2-oxoglutarate = 3-(imidazol-4-yl)-2-oxopropyl phosphate + L-glutamate. It participates in amino-acid biosynthesis; L-histidine biosynthesis; L-histidine from 5-phospho-alpha-D-ribose 1-diphosphate: step 7/9. This is Histidinol-phosphate aminotransferase 3 (hisC3) from Mesorhizobium japonicum (strain LMG 29417 / CECT 9101 / MAFF 303099) (Mesorhizobium loti (strain MAFF 303099)).